Consider the following 319-residue polypeptide: Bidirectional sugar transporter SWEET15 (319 aa).

The Extracellular segment spans residues 1–10; the sequence is MAFMSMERST. Residues 11–31 form a helical membrane-spanning segment; that stretch reads WAFTFGILGNLISLMVFLSPL. One can recognise a MtN3/slv 1 domain in the interval 13-99; that stretch reads FTFGILGNLI…AMYLAYAPKS (87 aa). The Cytoplasmic segment spans residues 32–50; the sequence is PTFYRVYRKKSTEGFQSTP. The chain crosses the membrane as a helical span at residues 51–71; the sequence is YVVTLFSCMLWMYYAFVKSGA. A topological domain (extracellular) is located at residue glutamate 72. A helical transmembrane segment spans residues 73–93; that stretch reads LLVTINGVGCVIETVYLAMYL. Residues 94-106 lie on the Cytoplasmic side of the membrane; that stretch reads AYAPKSARMLTAK. The chain crosses the membrane as a helical span at residues 107–127; it reads MLLGLNIGLFGVIALVTLLLS. Residues 128 to 134 are Extracellular-facing; that stretch reads RGELRVH. Residues 135–155 form a helical membrane-spanning segment; that stretch reads VLGWICVAVSLSVFAAPLSII. A MtN3/slv 2 domain is found at 135 to 219; the sequence is VLGWICVAVS…ALYMAYRSKK (85 aa). Topologically, residues 156–167 are cytoplasmic; that stretch reads RLVIRTKSVEFM. A helical membrane pass occupies residues 168–188; it reads PFSLSFFLVLSAVIWFLYGLL. At 189–191 the chain is on the extracellular side; it reads KKD. Residues 192 to 212 traverse the membrane as a helical segment; that stretch reads VFVALPNVLGFVFGVAQMALY. At 213–319 the chain is on the cytoplasmic side; that stretch reads MAYRSKKPLV…KPDMAIVVEV (107 aa).

Belongs to the SWEET sugar transporter family. In terms of assembly, forms homooligomers and/or heterooligomers.

The protein resides in the cell membrane. In terms of biological role, mediates both low-affinity uptake and efflux of sugar across the plasma membrane. In Oryza sativa subsp. indica (Rice), this protein is Bidirectional sugar transporter SWEET15 (SWEET15).